Consider the following 144-residue polypeptide: Deoxyuridine 5'-triphosphate nucleotidohydrolase (144 aa).

Residues S66, R133, F138, and G139 each contribute to the dUMP site.

The protein belongs to the dUTPase family. As to quaternary structure, homotrimer. Mg(2+) serves as cofactor.

The catalysed reaction is dUTP + H2O = dUMP + diphosphate + H(+). It participates in pyrimidine metabolism; dUMP biosynthesis; dUMP from dCTP (dUTP route): step 2/2. Functionally, involved in nucleotide metabolism via production of dUMP, the immediate precursor of thymidine nucleotides, and decreases the intracellular concentration of dUTP so that uracil cannot be incorporated into DNA. The sequence is that of Deoxyuridine 5'-triphosphate nucleotidohydrolase (DUT1) from Encephalitozoon cuniculi (strain GB-M1) (Microsporidian parasite).